Consider the following 531-residue polypeptide: Membrane protein insertase YidC (531 aa).

A run of 4 helical transmembrane segments spans residues Ala-5–Pro-25, Gly-343–Leu-363, Leu-415–Ile-435, and Pro-489–Val-509.

The protein belongs to the OXA1/ALB3/YidC family. Type 1 subfamily. Interacts with the Sec translocase complex via SecD. Specifically interacts with transmembrane segments of nascent integral membrane proteins during membrane integration.

Its subcellular location is the cell inner membrane. Required for the insertion and/or proper folding and/or complex formation of integral membrane proteins into the membrane. Involved in integration of membrane proteins that insert both dependently and independently of the Sec translocase complex, as well as at least some lipoproteins. Aids folding of multispanning membrane proteins. This chain is Membrane protein insertase YidC, found in Geobacter sulfurreducens (strain ATCC 51573 / DSM 12127 / PCA).